We begin with the raw amino-acid sequence, 79 residues long: uncharacterized protein (79 aa).

Residues 4-43 (QENEDLRKQLVEASELLKSQAKELKDAHQQQKLALQDFLE) adopt a coiled-coil conformation.

This is an uncharacterized protein from Homo sapiens (Human).